Here is a 340-residue protein sequence, read N- to C-terminus: Ketol-acid reductoisomerase (NADP(+)) (340 aa).

A KARI N-terminal Rossmann domain is found at alanine 2 to threonine 182. NADP(+)-binding positions include phenylalanine 25 to glutamine 28, serine 51, serine 53, and aspartate 83 to glutamine 86. The active site involves histidine 108. Glycine 134 is a binding site for NADP(+). The region spanning threonine 183–valine 328 is the KARI C-terminal knotted domain. Mg(2+)-binding residues include aspartate 191, glutamate 195, glutamate 227, and glutamate 231. Substrate is bound at residue serine 252.

This sequence belongs to the ketol-acid reductoisomerase family. Requires Mg(2+) as cofactor.

The enzyme catalyses (2R)-2,3-dihydroxy-3-methylbutanoate + NADP(+) = (2S)-2-acetolactate + NADPH + H(+). It carries out the reaction (2R,3R)-2,3-dihydroxy-3-methylpentanoate + NADP(+) = (S)-2-ethyl-2-hydroxy-3-oxobutanoate + NADPH + H(+). It participates in amino-acid biosynthesis; L-isoleucine biosynthesis; L-isoleucine from 2-oxobutanoate: step 2/4. The protein operates within amino-acid biosynthesis; L-valine biosynthesis; L-valine from pyruvate: step 2/4. Involved in the biosynthesis of branched-chain amino acids (BCAA). Catalyzes an alkyl-migration followed by a ketol-acid reduction of (S)-2-acetolactate (S2AL) to yield (R)-2,3-dihydroxy-isovalerate. In the isomerase reaction, S2AL is rearranged via a Mg-dependent methyl migration to produce 3-hydroxy-3-methyl-2-ketobutyrate (HMKB). In the reductase reaction, this 2-ketoacid undergoes a metal-dependent reduction by NADPH to yield (R)-2,3-dihydroxy-isovalerate. The polypeptide is Ketol-acid reductoisomerase (NADP(+)) (Chloroflexus aurantiacus (strain ATCC 29366 / DSM 635 / J-10-fl)).